Reading from the N-terminus, the 346-residue chain is Biotin synthase (346 aa).

Residues 38–256 (RQVQVSTLLS…IAVARIMMPT (219 aa)) form the Radical SAM core domain. [4Fe-4S] cluster contacts are provided by Cys-53, Cys-57, and Cys-60. Residues Cys-97, Cys-128, Cys-188, and Arg-260 each coordinate [2Fe-2S] cluster.

The protein belongs to the radical SAM superfamily. Biotin synthase family. As to quaternary structure, homodimer. It depends on [4Fe-4S] cluster as a cofactor. Requires [2Fe-2S] cluster as cofactor.

It carries out the reaction (4R,5S)-dethiobiotin + (sulfur carrier)-SH + 2 reduced [2Fe-2S]-[ferredoxin] + 2 S-adenosyl-L-methionine = (sulfur carrier)-H + biotin + 2 5'-deoxyadenosine + 2 L-methionine + 2 oxidized [2Fe-2S]-[ferredoxin]. Its pathway is cofactor biosynthesis; biotin biosynthesis; biotin from 7,8-diaminononanoate: step 2/2. Catalyzes the conversion of dethiobiotin (DTB) to biotin by the insertion of a sulfur atom into dethiobiotin via a radical-based mechanism. This Shigella boydii serotype 18 (strain CDC 3083-94 / BS512) protein is Biotin synthase.